Consider the following 508-residue polypeptide: Purine-cytosine permease fcyB (508 aa).

Residues 1–72 (MAGAFDFDLE…AEQTDTSVFN (72 aa)) are Cytoplasmic-facing. Residues 73-93 (IGSMWLAANMVVSSFAIGVLG) traverse the membrane as a helical segment. Residues 94-104 (KSVYSLGFVDA) are Extracellular-facing. The helical transmembrane segment at 105 to 125 (ILTVLFFNLLGIMTVCFFSCF) threads the bilayer. Over 126-147 (GPFGLRQMVFSRLWFGWYVTKG) the chain is Cytoplasmic. The chain crosses the membrane as a helical span at residues 148 to 168 (FAVLNILACLGWSAANAIVGA). Residues 169–177 (QMLHAVNSD) are Extracellular-facing. The helical transmembrane segment at 178–198 (VPGFAAILIISICTLLVTFAG) threads the bilayer. At 199 to 200 (YK) the chain is on the cytoplasmic side. A helical transmembrane segment spans residues 201-221 (VVHLYEYWSWIPTFIVFMIIL). Residues 222–243 (GTFAHSGDFQNIPMGVGTSEMG) lie on the Extracellular side of the membrane. Residues 244-264 (SVLSFGSAVYGFATGWTSYAA) form a helical membrane-spanning segment. Residues 265 to 278 (DYTVYQPANRSKRK) are Cytoplasmic-facing. The helical transmembrane segment at 279–299 (IFLSTWLGLIVPLLFVEMLGV) threads the bilayer. Residues 300 to 323 (AVMTATDIKGSKYDVGYATSGNGG) are Extracellular-facing. A helical transmembrane segment spans residues 324-344 (LIAAVLQPLGGFGDFCLVILA). Residues 345 to 374 (LSIVANNCPNFYSVALTVQVLSRYAQRVPR) are Cytoplasmic-facing. A helical transmembrane segment spans residues 375–395 (FIWTLFGTGVSIAIAIPGYSH). Topologically, residues 396–404 (FETVLENFM) are extracellular. A helical membrane pass occupies residues 405–425 (NFIAYWLAIYSAIAIMDHFVF). The Cytoplasmic segment spans residues 426-442 (KRGFSGYVVENFDKREK). A helical transmembrane segment spans residues 443–463 (LPVGIAATIAFGFGVAGMITG). The Extracellular portion of the chain corresponds to 464–477 (MSQPWYVGPIARHA). Residues 478-498 (AGGDVGFELGFAFAAFSYLCL) traverse the membrane as a helical segment. At 499–508 (RPFEIKFFGR) the chain is on the cytoplasmic side.

This sequence belongs to the purine-cytosine permease (2.A.39) family.

The protein localises to the cell membrane. In terms of biological role, this permease has a broad specificity towards purines, and also transports cytosine, but neither uracil nor thymine. Contributes very little in purine uptake. Its major role may be the uptake of cytosine. In Emericella nidulans (strain FGSC A4 / ATCC 38163 / CBS 112.46 / NRRL 194 / M139) (Aspergillus nidulans), this protein is Purine-cytosine permease fcyB (fcyB).